Reading from the N-terminus, the 430-residue chain is Serine hydroxymethyltransferase (430 aa).

Residue 120-122 (GHI) participates in (6S)-5,6,7,8-tetrahydrofolate binding. N6-(pyridoxal phosphate)lysine is present on lysine 226.

It belongs to the SHMT family. Homodimer. Requires pyridoxal 5'-phosphate as cofactor.

The protein localises to the cytoplasm. Its pathway is amino-acid biosynthesis; glycine biosynthesis; glycine from L-serine: step 1/1. Catalyzes the reversible interconversion of serine and glycine with a modified folate serving as the one-carbon carrier. Also exhibits a pteridine-independent aldolase activity toward beta-hydroxyamino acids, producing glycine and aldehydes, via a retro-aldol mechanism. The sequence is that of Serine hydroxymethyltransferase from Pyrobaculum aerophilum (strain ATCC 51768 / DSM 7523 / JCM 9630 / CIP 104966 / NBRC 100827 / IM2).